We begin with the raw amino-acid sequence, 256 residues long: UPF0280 protein MTH_727 (256 aa).

The protein belongs to the UPF0280 family.

The protein is UPF0280 protein MTH_727 of Methanothermobacter thermautotrophicus (strain ATCC 29096 / DSM 1053 / JCM 10044 / NBRC 100330 / Delta H) (Methanobacterium thermoautotrophicum).